Reading from the N-terminus, the 1078-residue chain is MPRRKQEQPKRLPSHVSRQDEAEGDFSEGEQWYGNSSETPSEASYGEVQENYKLSLEDRIQEQSTSPDTSLGSATPSSHTLELVALDGEVLRDSLQCQGHLSPGVSSVCDDDPPSSNKPLSSNLRRLLEAGSLKLDGTANGRVESPVNVGPSLSFSPPSHHAQQLSVLARKLAEKQDQSDQFTPSNRFIWNQGKWLPNSTTTCGLSPDSAILKLKAAANAVLQDKSLSRTEESLRFESFSSPFSSQSASSTLAALSKKVSERSLTPGQEHPPPASSFLSLASMTSSAALLKEVAARAAGSLLAEKSSLLPDDPLPLPSSEKKPEKVTPPPPPPPPTAQPPQSLELLLLPVSKGRASKPSNSAPEEESGKPFQCPICGLVIKRKSYWKRHMVIHTGLKSHQCPLCPFRCARKDNLKSHMKVHQHQDRGETFQCQLCPFTSSRHFSLKLHMRCHQHFLRTEAKVKEEIPDPDVKGSPHLSDSGCLGQQREGGGTELVGTVMTSNTPERTGQGGAGVAPLLVKEEPKEDNGLPTSFTLNAADRPANHTKLKDPSEYVSNSAAVLFSQDISVKMASDFLMKLSAANQKEPMNLNFKVKEEPKEEESLSMPLPRSSYVFSPEPEVSTPSVSEDPLTPQEGKGSVLRRDMSAKAASELLMKLSAESYKETQAVTVKEEPMEVDIQDSPASISPSRNIGYSTLMGREKTEPLQKLPEGRVPPERNLFSQDISVKMASELLFQLSEKVSKEHNHTKENAMRTTTSPFFSEDTFRQSPFTSNSKDLLPGESVLHGRVSAPETEKIVLEAGNGLPSWKFNDQLFPCDVCGKVFGRQQTLSRHLSLHTEERKYKCHLCPYAAKCRANLNQHLTVHSVKLVSTDTEDIVSAVTSEGSDGKKHPYYYSCHVCGFETELNVQFVSHMSLHVDKEQWMFSICCTACDFVTMEEAEIKTHIGTKHTGDDRKTPSESNSPSSSSLSTLSDSANGKDDSDSSQKNKGGNNLLVISVVPGSQPSLNNEEKPEKGFECVFCNFVCKTKNMFERHLQIHLITRMFECDVCHKFMKTPEQLLEHKKCHTVPTGGLNSGQW.

The span at 1 to 10 shows a compositional bias: basic and acidic residues; that stretch reads MPRRKQEQPK. The segment at 1-14 is mediates direct interaction with RBBP4; the sequence is MPRRKQEQPKRLPS. The disordered stretch occupies residues 1–76; the sequence is MPRRKQEQPK…PDTSLGSATP (76 aa). An RRK motif; mediates NuRD recruitment to telomeres motif is present at residues 3-5; it reads RRK. 2 stretches are compositionally biased toward polar residues: residues 33–42 and 62–76; these read YGNSSETPSE and EQST…SATP. Residues Lys175, Lys215, and Lys225 each participate in a glycyl lysine isopeptide (Lys-Gly) (interchain with G-Cter in SUMO2) cross-link. The disordered stretch occupies residues 307–341; sequence SLLPDDPLPLPSSEKKPEKVTPPPPPPPPTAQPPQ. Residues 326–338 are compositionally biased toward pro residues; sequence VTPPPPPPPPTAQ. Glycyl lysine isopeptide (Lys-Gly) (interchain with G-Cter in SUMO2) cross-links involve residues Lys357 and Lys369. 3 C2H2-type zinc fingers span residues 371–393, 399–421, and 430–452; these read FQCP…MVIH, HQCP…MKVH, and FQCQ…MRCH. Glycyl lysine isopeptide (Lys-Gly) (interchain with G-Cter in SUMO2) cross-links involve residues Lys463, Lys472, Lys520, Lys546, Lys577, Lys584, and Lys594. A disordered region spans residues 466–490; the sequence is IPDPDVKGSPHLSDSGCLGQQREGG. The interval 594–640 is disordered; it reads KEEPKEEESLSMPLPRSSYVFSPEPEVSTPSVSEDPLTPQEGKGSVL. Over residues 613 to 627 the composition is skewed to low complexity; it reads VFSPEPEVSTPSVSE. Glycyl lysine isopeptide (Lys-Gly) (interchain with G-Cter in SUMO2) cross-links involve residues Lys636 and Lys655. Lys670 is covalently cross-linked (Glycyl lysine isopeptide (Lys-Gly) (interchain with G-Cter in SUMO1); alternate). Lys670 is covalently cross-linked (Glycyl lysine isopeptide (Lys-Gly) (interchain with G-Cter in SUMO2); alternate). Residues Lys701, Lys707, Lys739, Lys775, and Lys795 each participate in a glycyl lysine isopeptide (Lys-Gly) (interchain with G-Cter in SUMO2) cross-link. 2 C2H2-type zinc fingers span residues 814–836 and 842–864; these read FPCD…LSLH and YKCH…LTVH. Residues Lys867 and Lys888 each participate in a glycyl lysine isopeptide (Lys-Gly) (interchain with G-Cter in SUMO2) cross-link. 2 C2H2-type zinc fingers span residues 894-916 and 926-949; these read YSCH…MSLH and ICCT…GTKH. Residues 945-957 are compositionally biased toward basic and acidic residues; that stretch reads IGTKHTGDDRKTP. Residues 945 to 990 form a disordered region; it reads IGTKHTGDDRKTPSESNSPSSSSLSTLSDSANGKDDSDSSQKNKGG. Lys955 is covalently cross-linked (Glycyl lysine isopeptide (Lys-Gly) (interchain with G-Cter in SUMO2)). The span at 958 to 974 shows a compositional bias: low complexity; the sequence is SESNSPSSSSLSTLSDS. Positions 976–985 are enriched in basic and acidic residues; that stretch reads NGKDDSDSSQ. Residue Lys1011 forms a Glycyl lysine isopeptide (Lys-Gly) (interchain with G-Cter in SUMO2) linkage. 2 consecutive C2H2-type zinc fingers follow at residues 1016–1038 and 1044–1066; these read FECV…LQIH and FECD…KKCH.

This sequence belongs to the krueppel C2H2-type zinc-finger protein family. As to quaternary structure, part of a transcription inhibitory ribonucleoprotein complex composed at least of the circular RNA circZNF827, HNRNPK and HNRNPL. Interacts with the nucleosome remodeling and histone deacetylase/NuRD complex. Interacts with RBBP4; the interaction is direct and recruits RBBP4, a component of the NuRD complex, to telomeres.

The protein resides in the nucleus. Its subcellular location is the chromosome. The protein localises to the telomere. As part of a ribonucleoprotein complex composed at least of HNRNPK, HNRNPL and the circular RNA circZNF827 that nucleates the complex on chromatin, may negatively regulate the transcription of genes involved in neuronal differentiation. Could also recruit the nucleosome remodeling and histone deacetylase/NuRD complex to telomeric regions of chromosomes to regulate chromatin remodeling as part of telomere maintenance. This is Zinc finger protein 827 (Znf827) from Mus musculus (Mouse).